A 596-amino-acid chain; its full sequence is Phosphoprotein (596 aa).

Polar residues-rich tracts occupy residues 1-11 (MENNAKDNQIM), 38-66 (TDSQ…QLES), and 74-85 (ENSGSVNENRQL). Disordered stretches follow at residues 1–25 (MENN…SSDI), 38–196 (TDSQ…ESIS), and 220–352 (KNTR…EEST). The interval 33 to 41 (EFILSTDSQ) is N0 binding. Positions 88–97 (SHERATETKN) are enriched in basic and acidic residues. The segment covering 127–144 (ISRSSPDPNNGTQIQESI) has biased composition (polar residues). Composition is skewed to basic and acidic residues over residues 151–168 (EMDK…KDVP) and 233–249 (EDDK…EDTN). Over residues 270–324 (TLKISTTTGESTRPQSGSQGKRITSWNILNSESGSRTESTSQNSQIPTSGKSNTV) the composition is skewed to polar residues. Residues 331-352 (LESRIKTQKTDGKEREDTEEST) are compositionally biased toward basic and acidic residues. Residues 374–441 (LDLYQDKRVV…KMDESHRRLI (68 aa)) form a multimerization region. A coiled-coil region spans residues 416–436 (LNQIQNEILSLKTDLKKMDES). The interval 442–475 (ENQKEQLSLITSLISNLKIMTERGGKKDQPENSG) is l protein binding.

This sequence belongs to the respirovirus P protein family. In terms of assembly, homotetramer. Interacts (via multimerization domain) with polymerase L; this interaction forms the polymerase complex. Interacts (via N-terminus) with N0; this interaction allows P to chaperon N0 before encapsidation and form the N-P complex. Interacts (via C-terminus) with N-RNA template; this interaction positions the polymerase on the template.

Functionally, essential cofactor of the RNA polymerase L that plays a central role in the transcription and replication by forming the polymerase complex with RNA polymerase L and recruiting L to the genomic N-RNA template for RNA synthesis. Also plays a central role in the encapsidation of nascent RNA chains by forming the encapsidation complex with the nucleocapsid protein N (N-P complex). Acts as a chaperone for newly synthesized free N protein, so-called N0, allowing encapsidation of nascent RNA chains during replication. The nucleoprotein protein N prevents excessive phosphorylation of P, which leads to down-regulation of viral transcription/ replication. Participates, together with N, in the formation of viral factories (viroplasms), which are large inclusions in the host cytoplasm where replication takes place. Recruits host PI4KB and remodel the host endoplasmic reticulum membrane to form viral replication factories. This is Phosphoprotein (P/V/D) from Bovine parainfluenza 3 virus (BPIV-3).